Consider the following 240-residue polypeptide: Probable phosphatase Athe_0620 (240 aa).

9 residues coordinate Zn(2+): His8, His10, His16, His41, Glu74, His102, His132, Asp192, and His194.

It belongs to the PHP family. Zn(2+) is required as a cofactor.

This Caldicellulosiruptor bescii (strain ATCC BAA-1888 / DSM 6725 / KCTC 15123 / Z-1320) (Anaerocellum thermophilum) protein is Probable phosphatase Athe_0620.